We begin with the raw amino-acid sequence, 578 residues long: Zinc finger-containing ubiquitin peptidase 1 (578 aa).

A C2H2-type 1 zinc finger spans residues 2–24 (LSCNICGETVTSEPDMKAHLIVH). The C2H2-type 2; atypical zinc finger occupies 29–52 (IICPFCKLSGVNYDEMCFHIETAH). C2H2-type zinc fingers lie at residues 154-177 (PECPFCGKIEEHSEDMETHVKTKH) and 193-215 (YDCPMCGLICTNYHILQEHVDLH). Positions 226 to 248 (DRVQCSGDLQLAHQLQQEEDRKR) are MIU. The tract at residues 249-274 (RSEESRQEIEEFQKLQRQYGLDNSGG) is zUBD/ZHA. N6-acetyllysine is present on lysine 262. Cysteine 360 acts as the Nucleophile in catalysis. Residue histidine 491 is the Proton acceptor of the active site. The active site involves aspartate 512.

Belongs to the peptidase C78 family. ZUFSP subfamily. In terms of assembly, interacts with RPA1 and RPA2.

It is found in the cytoplasm. Its subcellular location is the nucleus. It carries out the reaction Thiol-dependent hydrolysis of ester, thioester, amide, peptide and isopeptide bonds formed by the C-terminal Gly of ubiquitin (a 76-residue protein attached to proteins as an intracellular targeting signal).. Deubiquitinase with endodeubiquitinase activity that specifically interacts with and cleaves 'Lys-63'-linked long polyubiquitin chains. Shows only weak activity against 'Lys-11' and 'Lys-48'-linked chains. Plays an important role in genome stability pathways, functioning to prevent spontaneous DNA damage and also promote cellular survival in response to exogenous DNA damage. Modulates the ubiquitination status of replication protein A (RPA) complex proteins in response to replication stress. This Homo sapiens (Human) protein is Zinc finger-containing ubiquitin peptidase 1.